Reading from the N-terminus, the 312-residue chain is Ribosomal protein L11 methyltransferase (312 aa).

S-adenosyl-L-methionine-binding residues include T160, G181, D203, and N246.

The protein belongs to the methyltransferase superfamily. PrmA family.

The protein resides in the cytoplasm. It carries out the reaction L-lysyl-[protein] + 3 S-adenosyl-L-methionine = N(6),N(6),N(6)-trimethyl-L-lysyl-[protein] + 3 S-adenosyl-L-homocysteine + 3 H(+). Its function is as follows. Methylates ribosomal protein L11. This Staphylococcus aureus (strain bovine RF122 / ET3-1) protein is Ribosomal protein L11 methyltransferase.